Consider the following 107-residue polypeptide: Nucleoid-associated protein Mlg_1509 (107 aa).

It belongs to the YbaB/EbfC family. In terms of assembly, homodimer.

The protein resides in the cytoplasm. Its subcellular location is the nucleoid. Functionally, binds to DNA and alters its conformation. May be involved in regulation of gene expression, nucleoid organization and DNA protection. The polypeptide is Nucleoid-associated protein Mlg_1509 (Alkalilimnicola ehrlichii (strain ATCC BAA-1101 / DSM 17681 / MLHE-1)).